The sequence spans 817 residues: MSETFAKRASRRGYDPRAIEERWQRRWAETGLYKTDEDPSKPKHYALTMLPYPSGDLHVGHWYAMTPSDTRARFMRMRGYRVFFPIGFDAFGLPAENAAIKRGIHPRDWTYSNIERMRGQLRQMGTMFDFDAEVVTCDPEYYRWNQWFFLKFYEKGLAYREKAPVDWCPSCNTTLAREQVVGPDRRCERCDTPVIKRNLAQWLFKITDYAEELLDFSEIEWPERVKALQRNWIGRSEGAEIEFEIEGYGGVTVFTTRPDTLFGATFFVVAPEHPAVESITTPERGEEVRAYVERAARMSEIDRADVTREKTGVFTGAYAVNPANGERIPVYVADYVLMGYGTGAIMAVPAHDERDFEFAKKHGIEIRTVIAPPDWDGSPLERAYVGEGQMVNSGPFDGTPSAEGREKVTGWLRERGVGRPAVNYRLRDWLISRQRYWGTPIPIVYCERCGTVPVPEEDLPVLLPEDAEFMPTGESPLKFNDEFRKTECPRCGGPAERETDTMDTFVDSSWYQYRYLSPHYEEGPFDPERGSRWLPVDQYTGGIEHATMHLLYTRFFTKVMRDLGLVDFDEPMLRLFNQGVILGPDGNRMSKSRGNVVNPQEYVDRYGSDVLRCYLMFIGPWDEGGPWDPGGIEGVARWLRRAFTLVAGGDVSEAEADPGELSRRTHRLVKRVTEYLEGFRFNTAIAALMEHTNYLLAVKGEVGEEEWREAMRSFLLVLAPFAPHHAEEMWEILGEEYSVHEQGWPSWDEELVREETVTLVVQVNGKLRDRVEAPAGVDEGRARELALSSERVRAHVEGRELRKTVYVPGRLINLVVS.

The 'HIGH' region motif lies at 51-61 (PYPSGDLHVGH). The short motif at 588 to 592 (RMSKS) is the 'KMSKS' region element. An ATP-binding site is contributed by lysine 591.

Belongs to the class-I aminoacyl-tRNA synthetase family.

The protein resides in the cytoplasm. It catalyses the reaction tRNA(Leu) + L-leucine + ATP = L-leucyl-tRNA(Leu) + AMP + diphosphate. The sequence is that of Leucine--tRNA ligase from Rubrobacter xylanophilus (strain DSM 9941 / JCM 11954 / NBRC 16129 / PRD-1).